A 562-amino-acid chain; its full sequence is Phosphoglucomutase-1 (562 aa).

N-acetylmethionine is present on Met1. Residue Lys16 is modified to N6-acetyllysine. Arg23 is an alpha-D-glucose 1,6-bisphosphate binding site. Position 115 is a phosphothreonine (Thr115). Ser117 provides a ligand contact to alpha-D-glucose 1,6-bisphosphate. Ser117 functions as the Phosphoserine intermediate in the catalytic mechanism. Ser117 serves as a coordination point for Mg(2+). Ser117 and Ser134 each carry phosphoserine. At Thr185 the chain carries Phosphothreonine. Ser213 bears the Phosphoserine mark. Residues Asp288, Asp290, and Asp292 each coordinate Mg(2+). Positions 292 and 293 each coordinate alpha-D-glucose 1,6-bisphosphate. Residue Lys349 is modified to N6-acetyllysine. Phosphotyrosine is present on Tyr353. Thr357 lines the alpha-D-glucose 1,6-bisphosphate pocket. At Ser369 the chain carries Phosphoserine. Alpha-D-glucose 1,6-bisphosphate contacts are provided by Glu376, Ser378, and Lys389. Phosphoserine is present on Ser378. Position 419 is an N6-succinyllysine (Lys419). Residue Thr467 is modified to Phosphothreonine; by PAK1. 2 positions are modified to phosphoserine: Ser485 and Ser505. At Thr507 the chain carries Phosphothreonine. Phosphoserine occurs at positions 509 and 541.

The protein belongs to the phosphohexose mutase family. Monomer. It depends on Mg(2+) as a cofactor. Post-translationally, isoform 2 is the major calmodulin-dependent phosphoprotein in junctional skeletal sarcoplasmic reticulum vesicles. Phosphorylation at Thr-467 by PAK1 significantly enhances enzymatic activity.

The protein localises to the cytoplasm. The protein resides in the sarcoplasmic reticulum. The catalysed reaction is alpha-D-glucose 1-phosphate = alpha-D-glucose 6-phosphate. The enzyme catalyses O-phospho-L-seryl-[protein] + alpha-D-glucose 1-phosphate = alpha-D-glucose 1,6-bisphosphate + L-seryl-[protein]. It catalyses the reaction alpha-D-glucose 1,6-bisphosphate + L-seryl-[protein] = O-phospho-L-seryl-[protein] + alpha-D-glucose 6-phosphate. Glucose-1,6-bisphosphate enhances phosphorylation of the active site Ser-117, and thereby increases enzyme activity. Catalyzes the reversible isomerization of alpha-D-glucose 1-phosphate to alpha-D-glucose 6-phosphate. The mechanism proceeds via the intermediate compound alpha-D-glucose 1,6-bisphosphate. This enzyme participates in both the breakdown and synthesis of glucose. In Oryctolagus cuniculus (Rabbit), this protein is Phosphoglucomutase-1 (PGM1).